A 476-amino-acid chain; its full sequence is Chromosomal replication initiator protein DnaA (476 aa).

The segment at 1-87 (MSDRSDPTHA…AGVSNFAIVV (87 aa)) is domain I, interacts with DnaA modulators. The domain II stretch occupies residues 87–131 (VNPGIAQDAFAQHPEPAEQPYIETPTITAPTDNPGLPASPSRGDS). The domain III, AAA+ region stretch occupies residues 132–348 (RLNPKYGFDT…GTLIRVTAFA (217 aa)). Positions 176, 178, 179, and 180 each coordinate ATP. The interval 349 to 476 (SLNKTPVDLA…IKQNHRYGKM (128 aa)) is domain IV, binds dsDNA.

This sequence belongs to the DnaA family. In terms of assembly, oligomerizes as a right-handed, spiral filament on DNA at oriC.

The protein localises to the cytoplasm. In terms of biological role, plays an essential role in the initiation and regulation of chromosomal replication. ATP-DnaA binds to the origin of replication (oriC) to initiate formation of the DNA replication initiation complex once per cell cycle. Binds the DnaA box (a 9 base pair repeat at the origin) and separates the double-stranded (ds)DNA. Forms a right-handed helical filament on oriC DNA; dsDNA binds to the exterior of the filament while single-stranded (ss)DNA is stabiized in the filament's interior. The ATP-DnaA-oriC complex binds and stabilizes one strand of the AT-rich DNA unwinding element (DUE), permitting loading of DNA polymerase. After initiation quickly degrades to an ADP-DnaA complex that is not apt for DNA replication. Binds acidic phospholipids. This is Chromosomal replication initiator protein DnaA from Clavibacter sepedonicus (Clavibacter michiganensis subsp. sepedonicus).